We begin with the raw amino-acid sequence, 215 residues long: Adenylate kinase (215 aa).

ATP is bound at residue Gly-10–Thr-15. The tract at residues Ser-30–Val-59 is NMP. Residues Thr-31, Arg-36, Gln-57–Val-59, Gly-85–Arg-88, and Gln-92 contribute to the AMP site. Positions Gly-126–Asp-163 are LID. Residue Arg-127 participates in ATP binding. Positions 130 and 133 each coordinate Zn(2+). Residue Val-136–Tyr-137 coordinates ATP. Zn(2+) contacts are provided by Cys-150 and Cys-153. Residues Arg-160 and Arg-171 each contribute to the AMP site. Arg-199 is an ATP binding site.

It belongs to the adenylate kinase family. As to quaternary structure, monomer.

The protein resides in the cytoplasm. The enzyme catalyses AMP + ATP = 2 ADP. The protein operates within purine metabolism; AMP biosynthesis via salvage pathway; AMP from ADP: step 1/1. In terms of biological role, catalyzes the reversible transfer of the terminal phosphate group between ATP and AMP. Plays an important role in cellular energy homeostasis and in adenine nucleotide metabolism. The chain is Adenylate kinase from Syntrophomonas wolfei subsp. wolfei (strain DSM 2245B / Goettingen).